The primary structure comprises 92 residues: Protein S100-A12 (92 aa).

EF-hand domains lie at 13–48 (NIFHQYSVRKGHFDTLSKGELKQLLTKELANTIKNI) and 49–84 (KDKAVIDEIFQGLDANQDEQVDFQEFISLVAIALKA). A Cu cation-binding site is contributed by His-16. His-16 is a binding site for Zn(2+). Residues Ser-19, Lys-22, and His-24 each contribute to the Ca(2+) site. Asp-26 serves as a coordination point for Cu cation. A Zn(2+)-binding site is contributed by Asp-26. Ca(2+) is bound by residues Thr-27 and Glu-32. Residues 38 to 53 (TKELANTIKNIKDKAV) are hinge domain. Residues Asp-62, Asn-64, Asp-66, Gln-68, and Glu-73 each coordinate Ca(2+). His-86 and His-90 together coordinate Cu cation. 2 residues coordinate Zn(2+): His-86 and His-90.

Belongs to the S-100 family. Homodimer. Homooligomer (tetramer or hexamer) in the presence of calcium, zinc and copper ions. Interacts with AGER and both calcium and zinc are essential for the interaction. Interacts with CACYBP in a calcium-dependent manner. As to expression, predominantly expressed by neutrophils, monocytes and activated macrophages. Expressed by eosinophils and macrophages in asthmatic airways in regions where mast cells accumulate. Found in high concentrations in the serum of patients suffering from various inflammatory disorders, such as rheumatoid arthritis, psoriatic arthritis, Crohn's disease, ulcerative colitis, and Kawasaki disease.

Its subcellular location is the secreted. The protein resides in the cytoplasm. It is found in the cytoskeleton. The protein localises to the cell membrane. Functionally, S100A12 is a calcium-, zinc- and copper-binding protein which plays a prominent role in the regulation of inflammatory processes and immune response. Its pro-inflammatory activity involves recruitment of leukocytes, promotion of cytokine and chemokine production, and regulation of leukocyte adhesion and migration. Acts as an alarmin or a danger associated molecular pattern (DAMP) molecule and stimulates innate immune cells via binding to receptor for advanced glycation endproducts (AGER). Binding to AGER activates the MAP-kinase and NF-kappa-B signaling pathways leading to production of pro-inflammatory cytokines and up-regulation of cell adhesion molecules ICAM1 and VCAM1. Acts as a monocyte and mast cell chemoattractant. Can stimulate mast cell degranulation and activation which generates chemokines, histamine and cytokines inducing further leukocyte recruitment to the sites of inflammation. Can inhibit the activity of matrix metalloproteinases; MMP2, MMP3 and MMP9 by chelating Zn(2+) from their active sites. Possesses filariacidal and filariastatic activity. Calcitermin possesses antifungal activity against C.albicans and is also active against E.coli and P.aeruginosa but not L.monocytogenes and S.aureus. This chain is Protein S100-A12 (S100A12), found in Homo sapiens (Human).